The sequence spans 411 residues: Serine hydroxymethyltransferase (411 aa).

120-122 is a (6S)-5,6,7,8-tetrahydrofolate binding site; that stretch reads GHL. The residue at position 225 (lysine 225) is an N6-(pyridoxal phosphate)lysine. (6S)-5,6,7,8-tetrahydrofolate is bound at residue 350–352; the sequence is SPF.

Belongs to the SHMT family. Homodimer. Pyridoxal 5'-phosphate is required as a cofactor.

The protein localises to the cytoplasm. The enzyme catalyses (6R)-5,10-methylene-5,6,7,8-tetrahydrofolate + glycine + H2O = (6S)-5,6,7,8-tetrahydrofolate + L-serine. The protein operates within one-carbon metabolism; tetrahydrofolate interconversion. It participates in amino-acid biosynthesis; glycine biosynthesis; glycine from L-serine: step 1/1. Its function is as follows. Catalyzes the reversible interconversion of serine and glycine with tetrahydrofolate (THF) serving as the one-carbon carrier. This reaction serves as the major source of one-carbon groups required for the biosynthesis of purines, thymidylate, methionine, and other important biomolecules. Also exhibits THF-independent aldolase activity toward beta-hydroxyamino acids, producing glycine and aldehydes, via a retro-aldol mechanism. The polypeptide is Serine hydroxymethyltransferase (Lactobacillus johnsonii (strain CNCM I-12250 / La1 / NCC 533)).